We begin with the raw amino-acid sequence, 424 residues long: Gamma-glutamyl phosphate reductase (424 aa).

This sequence belongs to the gamma-glutamyl phosphate reductase family.

The protein resides in the cytoplasm. The catalysed reaction is L-glutamate 5-semialdehyde + phosphate + NADP(+) = L-glutamyl 5-phosphate + NADPH + H(+). It participates in amino-acid biosynthesis; L-proline biosynthesis; L-glutamate 5-semialdehyde from L-glutamate: step 2/2. In terms of biological role, catalyzes the NADPH-dependent reduction of L-glutamate 5-phosphate into L-glutamate 5-semialdehyde and phosphate. The product spontaneously undergoes cyclization to form 1-pyrroline-5-carboxylate. This Dehalococcoides mccartyi (strain ATCC BAA-2266 / KCTC 15142 / 195) (Dehalococcoides ethenogenes (strain 195)) protein is Gamma-glutamyl phosphate reductase.